Consider the following 57-residue polypeptide: MAVPKKRTSKSKKNLRKNTWKKKVLKRAMRALFIAKLDLNNLQDNVATLEDSNETSS.

The segment at 1 to 21 (MAVPKKRTSKSKKNLRKNTWK) is disordered.

This sequence belongs to the bacterial ribosomal protein bL32 family.

It localises to the plastid. The protein resides in the chloroplast. In Stigeoclonium helveticum (Green alga), this protein is Large ribosomal subunit protein bL32c.